The sequence spans 157 residues: 17.6 kDa class I heat shock protein 3 (157 aa).

Residues 43–157 (DVAAFTNAKV…PEVKSIDISG (115 aa)) enclose the sHSP domain.

It belongs to the small heat shock protein (HSP20) family. May form oligomeric structures.

It is found in the cytoplasm. The chain is 17.6 kDa class I heat shock protein 3 (HSP17.6C) from Arabidopsis thaliana (Mouse-ear cress).